Here is a 334-residue protein sequence, read N- to C-terminus: MSVNYAAGLSPYADKGKCGLPEIFDPPEELERKVWELARLMWQSSSVVFHTGAGISTASGIPDFRGPHGVWTMEERGLAPKFDTTFENARPSKTHMALVQLERMGFLSFLVSQNVDGLHVRSGFPRDKLAELHGNMFVEECPKCKTQYVRDTVVGTMGLKATGRLCTVAKTRGLRACRGELRDTILDWEDSLPDRDLMLADEASRTADLSVTLGTSLQIRPSGNLPLATKRRGGRLVIVNLQPTKHDRQADLRIHGYVDEVMCRLMKHLGLEIPAWDGPCVLDKALPPLPRPVALKAEPPVHLNGAVHVSYKSKPNSPILHRPPKRVKTEAAPS.

The residue at position 2 (Ser2) is an N-acetylserine. Ser10 bears the Phosphoserine mark. The region spanning 27–272 is the Deacetylase sirtuin-type domain; it reads PEELERKVWE…CRLMKHLGLE (246 aa). N6-acetyllysine is present on Lys33. Positions 53, 57, 64, 65, 71, 113, and 133 each coordinate NAD(+). The Proton acceptor role is filled by His133. 3 residues coordinate Zn(2+): Cys141, Cys144, and Cys166. Lys170 participates in a covalent cross-link: Glycyl lysine isopeptide (Lys-Gly) (interchain with G-Cter in ubiquitin). Zn(2+) is bound at residue Cys177. Residues Gly214, Ser216, Asn240, Gln242, and Val258 each coordinate NAD(+). The disordered stretch occupies residues 312–334; sequence KSKPNSPILHRPPKRVKTEAAPS.

It belongs to the sirtuin family. Class IV subfamily. In terms of assembly, homodimer; binds to nucleosomes and DNA ends as a homodimer. Interacts with RELA; interferes with RELA binding to target DNA. Interacts with SMARCA5; promoting recruitment of SMARCA5/SNF2H to double-strand breaks (DSBs) sites. Interacts with the mTORC2 complex; preventing the ability of SIRT6 to deacetylate FOXO1. Interacts with the CLOCK-BMAL1 complex; recruited by the CLOCK-BMAL1 complex to regulate expression of clock-controlled genes. Interacts with CSNK2A2; preventing CSNK2A2 localization to the nucleus. Zn(2+) serves as cofactor. Acetylated at Lys-33. Deacetylation at Lys-33 by SIRT1 promotes homomultimerization and binding to double-strand breaks (DSBs) sites. Post-translationally, phosphorylation at Ser-10 by MAPK8/JNK1 in response to oxidative stress stimulates the mono-ADP-ribosyltransferase activity on PARP1, leading to PARP1 recruitment to double-strand breaks (DSBs). In terms of processing, monoubiquitinated at Lys-170 by STUB1/CHIP, preventing its degradation by the proteasome. Sumoylated, leading to specifically decrease ability to deacetylate histone H3 at 'Lys-56' (H3K56ac). In terms of tissue distribution, highest levels are found in muscle, thymus, spleen, brain and heart (at protein level).

The protein localises to the nucleus. The protein resides in the chromosome. It is found in the telomere. It localises to the endoplasmic reticulum. The catalysed reaction is N(6)-acetyl-L-lysyl-[protein] + NAD(+) + H2O = 2''-O-acetyl-ADP-D-ribose + nicotinamide + L-lysyl-[protein]. The enzyme catalyses N(6)-tetradecanoyl-L-lysyl-[protein] + NAD(+) + H2O = 2''-O-tetradecanoyl-ADP-D-ribose + nicotinamide + L-lysyl-[protein]. It catalyses the reaction N(6)-hexadecanoyl-L-lysyl-[protein] + NAD(+) + H2O = 2''-O-hexadecanoyl-ADP-D-ribose + nicotinamide + L-lysyl-[protein]. It carries out the reaction L-lysyl-[protein] + NAD(+) = N(6)-(ADP-D-ribosyl)-L-lysyl-[protein] + nicotinamide + H(+). The catalysed reaction is L-arginyl-[protein] + NAD(+) = N(omega)-(ADP-D-ribosyl)-L-arginyl-[protein] + nicotinamide + H(+). Compared to the defatty-acylase activity, the protein deacetylase activity is weak in vitro, and requires activation. The histone deacetylase activity is strongly activated upon binding to nucleosomes and chromatin in vivo. Two molecules of SIRT6 associate with the acidic patch of one nucleosome, while the C-terminal disordered region of SIRT6 associates with nucleosomal DNA, leading to efficient histone deacetylation. The protein-lysine deacetylase activity is also activated by long-chain free fatty-acids. Its function is as follows. NAD-dependent protein deacetylase, deacylase and mono-ADP-ribosyltransferase that plays an essential role in DNA damage repair, telomere maintenance, metabolic homeostasis, inflammation, tumorigenesis and aging. Displays protein-lysine deacetylase or defatty-acylase (demyristoylase and depalmitoylase) activity, depending on the context. Acts as a key histone deacetylase by catalyzing deacetylation of histone H3 at 'Lys-9', 'Lys-18' and 'Lys-56' (H3K9ac, H3K18ac and H3K56ac, respectively), suppressing target gene expression of several transcription factors, including NF-kappa-B. Acts as an inhibitor of transcription elongation by mediating deacetylation of H3K9ac and H3K56ac, preventing release of NELFE from chromatin and causing transcriptional pausing. Involved in DNA repair by promoting double-strand break (DSB) repair: acts as a DSB sensor by recognizing and binding DSB sites, leading to (1) recruitment of DNA repair proteins, such as SMARCA5/SNF2H, and (2) deacetylation of histone H3K9ac and H3K56ac. SIRT6 participation to DSB repair is probably involved in extension of life span. Also promotes DNA repair by deacetylating non-histone proteins, such as DDB2 and p53/TP53. Specifically deacetylates H3K18ac at pericentric heterochromatin, thereby maintaining pericentric heterochromatin silencing at centromeres and protecting against genomic instability and cellular senescence. Involved in telomere maintenance by catalyzing deacetylation of histone H3 in telomeric chromatin, regulating telomere position effect and telomere movement in response to DNA damage. Required for embryonic stem cell differentiation by mediating histone deacetylation of H3K9ac. Plays a major role in metabolism by regulating processes such as glycolysis, gluconeogenesis, insulin secretion and lipid metabolism. Inhibits glycolysis via histone deacetylase activity and by acting as a corepressor of the transcription factor HIF1A, thereby controlling the expression of multiple glycolytic genes. Has tumor suppressor activity by repressing glycolysis, thereby inhibiting the Warburg effect. Also regulates glycolysis and tumorigenesis by mediating deacetylation and nuclear export of non-histone proteins, such as isoform M2 of PKM (PKM2). Acts as a negative regulator of gluconeogenesis by mediating deacetylation of non-histone proteins, such as FOXO1 and KAT2A/GCN5. Promotes beta-oxidation of fatty acids during fasting by catalyzing deacetylation of NCOA2, inducing coactivation of PPARA. Acts as a regulator of lipid catabolism in brown adipocytes, both by catalyzing deacetylation of histones and non-histone proteins, such as FOXO1. Also acts as a regulator of circadian rhythms, both by regulating expression of clock-controlled genes involved in lipid and carbohydrate metabolism, and by catalyzing deacetylation of PER2. The defatty-acylase activity is specifically involved in regulation of protein secretion. Has high activity toward long-chain fatty acyl groups and mediates protein-lysine demyristoylation and depalmitoylation of target proteins, such as RRAS2 and TNF, thereby regulating their secretion. Also acts as a mono-ADP-ribosyltransferase by mediating mono-ADP-ribosylation of PARP1, TRIM28/KAP1 or SMARCC2/BAF170. Mono-ADP-ribosyltransferase activity is involved in DNA repair, cellular senescence, repression of LINE-1 retrotransposon elements and regulation of transcription. In Mus musculus (Mouse), this protein is NAD-dependent protein deacylase sirtuin-6.